A 372-amino-acid chain; its full sequence is Pepsin A (372 aa).

Residues 1–42 (MSVVKIPLVKKKSLRQNLIENGKLKEFMRTHKYNLGSKYIRE) constitute a propeptide, activation peptide. The region spanning 60–369 (YFGTIGIGTP…DRGNNQIGLA (310 aa)) is the Peptidase A1 domain. Residue Asp-78 is part of the active site. Cys-91 and Cys-96 are oxidised to a cystine. Position 114 is a phosphoserine (Ser-114). Residues Cys-252 and Cys-256 are joined by a disulfide bond. The active site involves Asp-261. Cysteines 295 and 328 form a disulfide.

It belongs to the peptidase A1 family.

The protein localises to the secreted. The catalysed reaction is Preferential cleavage: hydrophobic, preferably aromatic, residues in P1 and P1' positions. Cleaves 1-Phe-|-Val-2, 4-Gln-|-His-5, 13-Glu-|-Ala-14, 14-Ala-|-Leu-15, 15-Leu-|-Tyr-16, 16-Tyr-|-Leu-17, 23-Gly-|-Phe-24, 24-Phe-|-Phe-25 and 25-Phe-|-Tyr-26 bonds in the B chain of insulin.. Its function is as follows. Shows particularly broad specificity; although bonds involving phenylalanine and leucine are preferred, many others are also cleaved to some extent. The sequence is that of Pepsin A (PGA) from Bos taurus (Bovine).